The primary structure comprises 352 residues: MQTPSIIQCGLLNSFARKMTDAISDNQIIATSRFFNIARDVADVVVSNTKLAQQYEQLSIDSLKEYLVSVAKFVAVDYSNTTSADVDDLIHKLRLFIEEECYQYNIDKEETCDGDVCVSDEYNEPAPKPKPKPKPKPAPKPKPAPKPKPAPKPAPKPAPKPAPKPAPKPAPKPAPKPAPEPAPEPAPEPAPKPAPEPAPEPAPIRPARRCDENPSNLETCCTNKALYGDFTDSSCDIVKKKTNWWLWGGIAILVIVLMIGGYFIYKRYFSAPKFENTGEFVNDMNFNNDVNFNNDVNFDNDMNYGNEGIDVSDLEILNLPVPSVSPVPSASIVPSVSPIPRGSPVPSASPIK.

The disordered stretch occupies residues 122-214 (YNEPAPKPKP…RPARRCDENP (93 aa)). Residues 129–145 (PKPKPKPKPAPKPKPAP) show a composition bias toward basic residues. Over residues 146–204 (KPKPAPKPAPKPAPKPAPKPAPKPAPKPAPKPAPEPAPEPAPEPAPKPAPEPAPEPAPI) the composition is skewed to pro residues. The interval 244–264 (WWLWGGIAILVIVLMIGGYFI) is hydrophobic.

As to quaternary structure, interacts with the major capsid protein.

It localises to the virion. In terms of biological role, one of the minor capsid proteins that constitute a network internal to the major capsid proteins and outside the lipid membrane. The minor capsid protein P14 does not serve a cross-linking function between neighboring capsomers, it may play a role in the viral capsid assembly. This is Minor capsid protein P14 from Chlorella (PBCV-1).